A 474-amino-acid polypeptide reads, in one-letter code: tRNA-2-methylthio-N(6)-dimethylallyladenosine synthase (474 aa).

Positions 3–120 (QKLHIKTWGC…LPEMINQIRG (118 aa)) constitute an MTTase N-terminal domain. [4Fe-4S] cluster contacts are provided by Cys-12, Cys-49, Cys-83, Cys-157, Cys-161, and Cys-164. In terms of domain architecture, Radical SAM core spans 143–375 (KAEGPTAFVS…QQRINNQAAK (233 aa)). One can recognise a TRAM domain in the interval 378–441 (RAMLGTEQRV…TNSLRGDVIR (64 aa)).

The protein belongs to the methylthiotransferase family. MiaB subfamily. As to quaternary structure, monomer. [4Fe-4S] cluster serves as cofactor.

It is found in the cytoplasm. It carries out the reaction N(6)-dimethylallyladenosine(37) in tRNA + (sulfur carrier)-SH + AH2 + 2 S-adenosyl-L-methionine = 2-methylsulfanyl-N(6)-dimethylallyladenosine(37) in tRNA + (sulfur carrier)-H + 5'-deoxyadenosine + L-methionine + A + S-adenosyl-L-homocysteine + 2 H(+). Catalyzes the methylthiolation of N6-(dimethylallyl)adenosine (i(6)A), leading to the formation of 2-methylthio-N6-(dimethylallyl)adenosine (ms(2)i(6)A) at position 37 in tRNAs that read codons beginning with uridine. The chain is tRNA-2-methylthio-N(6)-dimethylallyladenosine synthase from Actinobacillus succinogenes (strain ATCC 55618 / DSM 22257 / CCUG 43843 / 130Z).